Reading from the N-terminus, the 562-residue chain is Arginine--tRNA ligase (562 aa).

The short motif at 121 to 131 (PNIAKPFSVGH) is the 'HIGH' region element.

It belongs to the class-I aminoacyl-tRNA synthetase family. In terms of assembly, monomer.

The protein resides in the cytoplasm. It carries out the reaction tRNA(Arg) + L-arginine + ATP = L-arginyl-tRNA(Arg) + AMP + diphosphate. The chain is Arginine--tRNA ligase from Streptococcus uberis (strain ATCC BAA-854 / 0140J).